The sequence spans 220 residues: Deoxyribose-phosphate aldolase (220 aa).

The Proton donor/acceptor role is filled by aspartate 89. The active-site Schiff-base intermediate with acetaldehyde is lysine 151. Lysine 180 (proton donor/acceptor) is an active-site residue.

Belongs to the DeoC/FbaB aldolase family. DeoC type 1 subfamily.

It is found in the cytoplasm. The catalysed reaction is 2-deoxy-D-ribose 5-phosphate = D-glyceraldehyde 3-phosphate + acetaldehyde. The protein operates within carbohydrate degradation; 2-deoxy-D-ribose 1-phosphate degradation; D-glyceraldehyde 3-phosphate and acetaldehyde from 2-deoxy-alpha-D-ribose 1-phosphate: step 2/2. Its function is as follows. Catalyzes a reversible aldol reaction between acetaldehyde and D-glyceraldehyde 3-phosphate to generate 2-deoxy-D-ribose 5-phosphate. In Staphylococcus epidermidis (strain ATCC 35984 / DSM 28319 / BCRC 17069 / CCUG 31568 / BM 3577 / RP62A), this protein is Deoxyribose-phosphate aldolase.